The sequence spans 358 residues: Photosystem II protein D1 (358 aa).

3 helical membrane-spanning segments follow: residues Y29–I46, H116–L131, and W140–S154. A chlorophyll a-binding site is contributed by H116. W124 is a binding site for pheophytin a. [CaMn4O5] cluster contacts are provided by D168 and E187. A helical membrane pass occupies residues F195 to L216. Chlorophyll a is bound at residue H196. Residues H213 and S262–F263 each bind a quinone. H213 lines the Fe cation pocket. H270 lines the Fe cation pocket. A helical transmembrane segment spans residues F272–L286. H330, E331, D340, and A342 together coordinate [CaMn4O5] cluster. Residues A343 to G358 constitute a propeptide that is removed on maturation.

Belongs to the reaction center PufL/M/PsbA/D family. As to quaternary structure, PSII is composed of 1 copy each of membrane proteins PsbA, PsbB, PsbC, PsbD, PsbE, PsbF, PsbH, PsbI, PsbJ, PsbK, PsbL, PsbM, PsbT, PsbX, PsbY, PsbZ, Psb30/Ycf12, peripheral proteins PsbO, CyanoQ (PsbQ), PsbU, PsbV and a large number of cofactors. It forms dimeric complexes. Requires The D1/D2 heterodimer binds P680, chlorophylls that are the primary electron donor of PSII, and subsequent electron acceptors. It shares a non-heme iron and each subunit binds pheophytin, quinone, additional chlorophylls, carotenoids and lipids. D1 provides most of the ligands for the Mn4-Ca-O5 cluster of the oxygen-evolving complex (OEC). There is also a Cl(-1) ion associated with D1 and D2, which is required for oxygen evolution. The PSII complex binds additional chlorophylls, carotenoids and specific lipids. as cofactor. Tyr-159 forms a radical intermediate that is referred to as redox-active TyrZ, YZ or Y-Z. Post-translationally, C-terminally processed by CtpA; processing is essential to allow assembly of the oxygen-evolving complex and thus photosynthetic growth.

It is found in the cellular thylakoid membrane. It carries out the reaction 2 a plastoquinone + 4 hnu + 2 H2O = 2 a plastoquinol + O2. Functionally, photosystem II (PSII) is a light-driven water:plastoquinone oxidoreductase that uses light energy to abstract electrons from H(2)O, generating O(2) and a proton gradient subsequently used for ATP formation. It consists of a core antenna complex that captures photons, and an electron transfer chain that converts photonic excitation into a charge separation. The D1/D2 (PsbA/PsbD) reaction center heterodimer binds P680, the primary electron donor of PSII as well as several subsequent electron acceptors. In Mastigocladus laminosus (Fischerella sp.), this protein is Photosystem II protein D1.